The chain runs to 629 residues: uncharacterized protein (629 aa).

Positions 4-255 (LKAENLYKTY…KRAEREAQAE (252 aa)) constitute an ABC transporter 1 domain. 36–43 (GPNGTGKS) contacts ATP. Residues 284 to 304 (KARIDRVETLKEQTGPQSSGS) form a disordered region. Residues 285 to 294 (ARIDRVETLK) are compositionally biased toward basic and acidic residues. Over residues 295 to 304 (EQTGPQSSGS) the composition is skewed to polar residues. The ABC transporter 2 domain occupies 319-537 (IEAENVMIAY…EESKAKKAAP (219 aa)). ATP is bound at residue 351 to 358 (GPNGIGKT). The interval 530–555 (SKAKKAAPKPAAEEKTAEAEPKKKRK) is disordered. Over residues 540–550 (AAEEKTAEAEP) the composition is skewed to basic and acidic residues. Residues 560-629 (KDQLEWDGIE…LSLMIEELES (70 aa)) are a coiled coil.

The protein belongs to the ABC transporter superfamily.

This is an uncharacterized protein from Bacillus subtilis (strain 168).